Reading from the N-terminus, the 218-residue chain is 25.3 kDa vesicle transport protein SEC22-1 (218 aa).

Over 1–192 the chain is Cytoplasmic; that stretch reads MVKMTLIARV…DKAKDLNRQA (192 aa). The Longin domain maps to 6–120; that stretch reads LIARVTDGLP…YAFIKFDTFI (115 aa). The v-SNARE coiled-coil homology domain maps to 135–195; it reads NIAKLNDELY…KDLNRQALIR (61 aa). Residues 193–213 traverse the membrane as a helical; Anchor for type IV membrane protein segment; sequence LIRKWAPVAIVFGVVFLLFWV. Residues 214–218 are Vesicular-facing; it reads KNKLW.

It belongs to the synaptobrevin family. As to quaternary structure, interacts with SEC24A. As to expression, mainly expressed in flowers and siliques, to a lower extent in seedlings, and barely in roots and leaves.

It localises to the golgi apparatus membrane. It is found in the endoplasmic reticulum membrane. V-SNARE involved in vesicle trafficking from the ER to the Golgi complex and required for early secretion. Involved in endoplasmic reticulum (ER) biogenesis and functions as well as for Golgi-stack integrity. Essential for gametophytes development. Involved in cesium Cs(+) accumulation, a non-essential cation. This chain is 25.3 kDa vesicle transport protein SEC22-1, found in Arabidopsis thaliana (Mouse-ear cress).